A 241-amino-acid polypeptide reads, in one-letter code: Homeobox protein TGIF2LX (241 aa).

2 disordered regions span residues 1–58 (MEAA…GNLP) and 126–209 (TGKD…VSPE). The span at 21-39 (AKTQSPAQDTSIMSRNNAD) shows a compositional bias: polar residues. A DNA-binding region (homeobox; TALE-type) is located at residues 48–111 (EHKKKRKGNL…INARRRILPD (64 aa)).

The protein belongs to the TALE/TGIF homeobox family.

It localises to the nucleus. May have a transcription role in testis. In Gorilla gorilla gorilla (Western lowland gorilla), this protein is Homeobox protein TGIF2LX (TGIF2LX).